Here is a 132-residue protein sequence, read N- to C-terminus: MGNDTIANIITSIRNADIVKKKTVRIIATNTTKNVVRILLQEGFIEDAREHREGQKSFSVLTLRYRGRKEKTYITTSKRTSKPGLRIYSNSQKVPKVLGGMGVVILSTSQGIMTDREARRRRIGGEILCYVR.

This sequence belongs to the universal ribosomal protein uS8 family. As to quaternary structure, part of the 30S ribosomal subunit.

It localises to the plastid. The protein localises to the chloroplast. Functionally, one of the primary rRNA binding proteins, it binds directly to 16S rRNA central domain where it helps coordinate assembly of the platform of the 30S subunit. The sequence is that of Small ribosomal subunit protein uS8c (rps8) from Cycas taitungensis (Prince sago).